Here is a 322-residue protein sequence, read N- to C-terminus: Ribosome biogenesis protein RLP7 (322 aa).

Polar residues predominate over residues 1–16 (MSSTQDSKAQTLNSNP). Residues 1-52 (MSSTQDSKAQTLNSNPEILLRKRRNADRTRIERQELAKKKREEQIKKKRSNK) form a disordered region. S2 bears the N-acetylserine mark. Phosphoserine is present on S14. The segment covering 26 to 45 (ADRTRIERQELAKKKREEQI) has biased composition (basic and acidic residues). T120 carries the phosphothreonine modification. S278 is subject to Phosphoserine.

This sequence belongs to the universal ribosomal protein uL30 family.

The protein localises to the nucleus. The protein resides in the nucleolus. In terms of biological role, involved in the biogenesis of the 60S ribosomal subunit. May act as a specificity factor that binds precursor rRNAs and tethers the enzymes that carry out the early 5' to 3' exonucleolytic reactions that generate the mature rRNAs. This is Ribosome biogenesis protein RLP7 (RLP7) from Saccharomyces cerevisiae (strain ATCC 204508 / S288c) (Baker's yeast).